A 220-amino-acid polypeptide reads, in one-letter code: Deoxyribose-phosphate aldolase (220 aa).

Residue aspartate 89 is the Proton donor/acceptor of the active site. Residue lysine 150 is the Schiff-base intermediate with acetaldehyde of the active site. Lysine 182 acts as the Proton donor/acceptor in catalysis.

It belongs to the DeoC/FbaB aldolase family. DeoC type 1 subfamily.

The protein localises to the cytoplasm. It carries out the reaction 2-deoxy-D-ribose 5-phosphate = D-glyceraldehyde 3-phosphate + acetaldehyde. The protein operates within carbohydrate degradation; 2-deoxy-D-ribose 1-phosphate degradation; D-glyceraldehyde 3-phosphate and acetaldehyde from 2-deoxy-alpha-D-ribose 1-phosphate: step 2/2. Catalyzes a reversible aldol reaction between acetaldehyde and D-glyceraldehyde 3-phosphate to generate 2-deoxy-D-ribose 5-phosphate. The polypeptide is Deoxyribose-phosphate aldolase (Mycoplasmoides pirum (Mycoplasma pirum)).